The following is a 108-amino-acid chain: Competence protein ComGC (108 aa).

A signal peptide spans 1–13; that stretch reads MKKMMTFLKKAKV. Residues 14–39 are may be involved in polymerization of ComGC; it reads KAFTLVEMLVVLLIISVLFLLFVPNL. Residue Phe-16 is modified to N-methylphenylalanine. A helical membrane pass occupies residues 16 to 36; it reads FTLVEMLVVLLIISVLFLLFV.

It belongs to the ComGC family. In terms of assembly, the transformation pili are flexible filaments, consisting mainly of the major pilin ComGC and smaller amounts of the minor pilins, including at least ComGD, ComGF and ComGG, and perhaps ComGE. Homodimer. Forms higher-order multimers. Interacts with ComGG; the interaction is probably direct. Post-translationally, undergoes proteolytic cleavage.

It is found in the cell membrane. The protein localises to the cell surface. It localises to the fimbrium. The protein resides in the secreted. Functionally, major component of the type IV-like pilus (T4P) that plays a role in transformation. Transformation pili are dynamically extended and retracted, perhaps thereby promoting DNA uptake and transformation. Required for transformation. Required for DNA binding. This is Competence protein ComGC from Streptococcus pneumoniae serotype 4 (strain ATCC BAA-334 / TIGR4).